We begin with the raw amino-acid sequence, 591 residues long: Frizzled and smoothened-like protein F (591 aa).

The N-terminal stretch at 1–17 (MKILIIFIIFIISYISG) is a signal peptide. The Extracellular portion of the chain corresponds to 18–244 (FEIPKGFGIG…KWDQLLTMSK (227 aa)). In terms of domain architecture, FZ spans 30-177 (IPDAECLNYI…GTFAVPCSDP (148 aa)). Cystine bridges form between Cys35-Cys105, Cys48-Cys98, and Cys123-Cys174. 4 N-linked (GlcNAc...) asparagine glycosylation sites follow: Asn167, Asn187, Asn202, and Asn230. A helical membrane pass occupies residues 245–265 (ILSTISFILSLYNVLTFGIIN). The Cytoplasmic portion of the chain corresponds to 266-275 (KKVSDPHKCT). Residues 276–296 (CFFSGSIALVNLCDIITYGIG) form a helical membrane-spanning segment. The Extracellular portion of the chain corresponds to 297–321 (YEELLCPEPGRSAKQQLDPVCGLTG). A helical membrane pass occupies residues 322–342 (AFFHLGITYCVLWSMTMGLVL). At 343 to 353 (YCSVKRQKWFK) the chain is on the cytoplasmic side. A helical membrane pass occupies residues 354–374 (FNYFLIGNTTFTITTVVIAAA). The Extracellular portion of the chain corresponds to 375 to 397 (TSKFEAGLGSIECWIRDRWYAIS). Residues 398–418 (LFWIPCGIALLIGSFCIIAVI) traverse the membrane as a helical segment. Over 419–442 (HEVYKTSKKSISNRNDLLQRELKP) the chain is Cytoplasmic. Residues 443–463 (LLIVIFISGSFLYLFIFFFDI) traverse the membrane as a helical segment. Residues 464–495 (ERKFGGYRSAVEDYVLCLLNGSQEECFTTGPS) lie on the Extracellular side of the membrane. Asn483 carries N-linked (GlcNAc...) asparagine glycosylation. Residues 496–516 (YVPYFLFYLVIRWFGIIFFLF) form a helical membrane-spanning segment. Residues 517–591 (YGTSNIARKI…AVELESIKIN (75 aa)) are Cytoplasmic-facing. Residues 538 to 571 (SSISPKSTPKSSPKNSDSKINSNSTNNNNMILND) show a composition bias toward low complexity. Residues 538–573 (SSISPKSTPKSSPKNSDSKINSNSTNNNNMILNDNN) form a disordered region.

It belongs to the G-protein coupled receptor Fz/Smo family.

It localises to the membrane. The protein is Frizzled and smoothened-like protein F (fslF) of Dictyostelium discoideum (Social amoeba).